The primary structure comprises 491 residues: Protein nucleotidyltransferase YdiU (491 aa).

Residues G94, G96, R97, K117, D129, G130, R180, and R187 each contribute to the ATP site. D256 functions as the Proton acceptor in the catalytic mechanism. Mg(2+)-binding residues include N257 and D266. D266 serves as a coordination point for ATP.

The protein belongs to the SELO family. Requires Mg(2+) as cofactor. The cofactor is Mn(2+).

It catalyses the reaction L-seryl-[protein] + ATP = 3-O-(5'-adenylyl)-L-seryl-[protein] + diphosphate. The enzyme catalyses L-threonyl-[protein] + ATP = 3-O-(5'-adenylyl)-L-threonyl-[protein] + diphosphate. The catalysed reaction is L-tyrosyl-[protein] + ATP = O-(5'-adenylyl)-L-tyrosyl-[protein] + diphosphate. It carries out the reaction L-histidyl-[protein] + UTP = N(tele)-(5'-uridylyl)-L-histidyl-[protein] + diphosphate. It catalyses the reaction L-seryl-[protein] + UTP = O-(5'-uridylyl)-L-seryl-[protein] + diphosphate. The enzyme catalyses L-tyrosyl-[protein] + UTP = O-(5'-uridylyl)-L-tyrosyl-[protein] + diphosphate. Functionally, nucleotidyltransferase involved in the post-translational modification of proteins. It can catalyze the addition of adenosine monophosphate (AMP) or uridine monophosphate (UMP) to a protein, resulting in modifications known as AMPylation and UMPylation. This Alkaliphilus metalliredigens (strain QYMF) protein is Protein nucleotidyltransferase YdiU.